Here is a 145-residue protein sequence, read N- to C-terminus: Leghemoglobin (145 aa).

Residues 3–145 form the Globin domain; that stretch reads GFTEKQEALV…ELAAALKKAF (143 aa). Nitrated tyrosine occurs at positions 26 and 31. Residue His62 coordinates O2. The heme b site is built by Lys65, His93, and Lys96. At Tyr134 the chain carries Nitrated tyrosine.

This sequence belongs to the plant globin family. In terms of assembly, monomer. Post-translationally, nitrated in effective nodules and particularly in hypoxic conditions; this mechanism may play a protective role in the symbiosis by buffering toxic peroxynitrite NO(2)(-). Nitration level decrease during nodule senescence. Root nodules.

It localises to the cytoplasm. It is found in the cytosol. The protein resides in the nucleus. Functionally, leghemoglobin that reversibly binds oxygen O(2) through a pentacoordinated heme iron. In root nodules, facilitates the diffusion of oxygen to the bacteroids while preventing the bacterial nitrogenase from being inactivated by buffering dioxygen, nitric oxide and carbon monoxide, and promoting the formation of reactive oxygen species (ROS, e.g. H(2)O(2)). This role is essential for symbiotic nitrogen fixation (SNF). The sequence is that of Leghemoglobin from Psophocarpus tetragonolobus (Winged bean).